Consider the following 110-residue polypeptide: Iron-sulfur cluster assembly protein CyaY (110 aa).

It belongs to the frataxin family.

Functionally, involved in iron-sulfur (Fe-S) cluster assembly. May act as a regulator of Fe-S biogenesis. The chain is Iron-sulfur cluster assembly protein CyaY from Ectopseudomonas mendocina (strain ymp) (Pseudomonas mendocina).